The following is a 439-amino-acid chain: Phthalate 4,5-dioxygenase oxygenase subunit (439 aa).

A Rieske domain is found at 27-134; sequence WTPVCLLEEV…TREWGGFVWA (108 aa). 4 residues coordinate [2Fe-2S] cluster: Cys-70, His-72, Cys-89, and His-92. Residues His-181 and His-186 each contribute to the Fe cation site.

This sequence belongs to the bacterial ring-hydroxylating dioxygenase alpha subunit family. In terms of assembly, this dioxygenase system consists of two proteins: phthalate oxygenase and phthalate oxygenase reductase. [2Fe-2S] cluster is required as a cofactor. The cofactor is Fe cation.

The enzyme catalyses phthalate + NADH + O2 + H(+) = cis-4,5-dihydroxycyclohexa-2,6-diene-1,2-dicarboxylate + NAD(+). It participates in xenobiotic degradation; phthalate degradation; 3,4-dihydroxybenzoate from phthalate: step 1/3. This is Phthalate 4,5-dioxygenase oxygenase subunit (pht3) from Pseudomonas putida (Arthrobacter siderocapsulatus).